Reading from the N-terminus, the 233-residue chain is MKLSVGIFFGGLFAALGVLLFLVAFGTDYWLLATEIGRCSKAPEDAGTEKATFHHEGFFWRCWFSGNVREHNTSMWKFWYTNQSPSKNCTHAYLSPFPHIRDEHNSTSYDSAVIYRGFWTVLMLLGVITIVMASFLIICAAPFASHILYKAGGGFYILAGVLFSLVVVMYVIWVQAMADLENYTNMKKMDCPDFAVYVRYGWSFMLAPIGVFFALLAGMLFLLVGRAIYLNSD.

Positions 1-26 (MKLSVGIFFGGLFAALGVLLFLVAFG) are cleaved as a signal peptide. Over 27–117 (TDYWLLATEI…SYDSAVIYRG (91 aa)) the chain is Extracellular. The segment at 52-62 (TFHHEGFFWRC) is interaction with ITGB1. N-linked (GlcNAc...) asparagine glycans are attached at residues asparagine 88 and asparagine 105. A helical transmembrane segment spans residues 118 to 138 (FWTVLMLLGVITIVMASFLII). Topologically, residues 139 to 153 (CAAPFASHILYKAGG) are cytoplasmic. Residues 154–174 (GFYILAGVLFSLVVVMYVIWV) traverse the membrane as a helical segment. The Extracellular segment spans residues 175-203 (QAMADLENYTNMKKMDCPDFAVYVRYGWS). The helical transmembrane segment at 204-224 (FMLAPIGVFFALLAGMLFLLV) threads the bilayer. The Cytoplasmic segment spans residues 225–233 (GRAIYLNSD).

It belongs to the TMEM182 family. Interacts with ITGB1. As to expression, expressed in skeletal muscle and adipose tissue.

It is found in the cell membrane. Negatively regulates myogenesis and skeletal muscle regeneration via its association with ITGB1. Modulates ITGB1 activation by decreasing ITGB1-LAMB1 interaction and inhibiting ITGB1-mediated intracellular signaling during myogenesis. The polypeptide is Transmembrane protein 182 (TMEM182) (Gallus gallus (Chicken)).